A 183-amino-acid chain; its full sequence is Putative 3-methyladenine DNA glycosylase (183 aa).

It belongs to the DNA glycosylase MPG family.

This is Putative 3-methyladenine DNA glycosylase from Legionella pneumophila (strain Corby).